The following is a 279-amino-acid chain: Pantothenate synthetase (279 aa).

26–33 is an ATP binding site; it reads MGNLHEGH. H33 acts as the Proton donor in catalysis. Position 57 (Q57) interacts with (R)-pantoate. Q57 is a beta-alanine binding site. 144–147 lines the ATP pocket; that stretch reads GKKD. Q150 is a (R)-pantoate binding site. Residues V173 and 181-184 each bind ATP; that span reads LSSR.

The protein belongs to the pantothenate synthetase family. As to quaternary structure, homodimer.

The protein localises to the cytoplasm. It catalyses the reaction (R)-pantoate + beta-alanine + ATP = (R)-pantothenate + AMP + diphosphate + H(+). It participates in cofactor biosynthesis; (R)-pantothenate biosynthesis; (R)-pantothenate from (R)-pantoate and beta-alanine: step 1/1. Catalyzes the condensation of pantoate with beta-alanine in an ATP-dependent reaction via a pantoyl-adenylate intermediate. This Burkholderia lata (strain ATCC 17760 / DSM 23089 / LMG 22485 / NCIMB 9086 / R18194 / 383) protein is Pantothenate synthetase.